The following is a 232-amino-acid chain: Large ribosomal subunit protein uL1 (232 aa).

Belongs to the universal ribosomal protein uL1 family. In terms of assembly, part of the 50S ribosomal subunit.

Binds directly to 23S rRNA. The L1 stalk is quite mobile in the ribosome, and is involved in E site tRNA release. Its function is as follows. Protein L1 is also a translational repressor protein, it controls the translation of the L11 operon by binding to its mRNA. This is Large ribosomal subunit protein uL1 from Amoebophilus asiaticus (strain 5a2).